A 298-amino-acid polypeptide reads, in one-letter code: Probable endonuclease 4 (298 aa).

Zn(2+) contacts are provided by H69, H111, E146, D180, H183, H215, D228, H230, and E260.

Belongs to the AP endonuclease 2 family. Zn(2+) is required as a cofactor.

It carries out the reaction Endonucleolytic cleavage to 5'-phosphooligonucleotide end-products.. Its function is as follows. Endonuclease IV plays a role in DNA repair. It cleaves phosphodiester bonds at apurinic or apyrimidinic (AP) sites, generating a 3'-hydroxyl group and a 5'-terminal sugar phosphate. This chain is Probable endonuclease 4, found in Bacillus cereus (strain G9842).